The primary structure comprises 306 residues: Nucleotide-binding protein RSal33209_2275 (306 aa).

29–36 (GMSGAGRS) contributes to the ATP binding site. Residue 80-83 (DVRG) coordinates GTP.

It belongs to the RapZ-like family.

Its function is as follows. Displays ATPase and GTPase activities. The chain is Nucleotide-binding protein RSal33209_2275 from Renibacterium salmoninarum (strain ATCC 33209 / DSM 20767 / JCM 11484 / NBRC 15589 / NCIMB 2235).